The following is a 662-amino-acid chain: Leucine aminopeptidase 2 (662 aa).

A peptide contacts are provided by residues glutamine 178–glutamate 180 and proline 304–glutamate 309. Histidine 333 is a binding site for Zn(2+). Glutamate 334 functions as the Proton acceptor in the catalytic mechanism. Residues histidine 337 and glutamate 356 each contribute to the Zn(2+) site. Catalysis depends on tyrosine 422, which acts as the Proton donor.

The protein belongs to the peptidase M1 family. It depends on Zn(2+) as a cofactor.

The protein resides in the cytoplasm. Its subcellular location is the nucleus. The enzyme catalyses an epoxide + H2O = an ethanediol. In terms of biological role, aminopeptidase that preferentially cleaves di- and tripeptides. Also has low epoxide hydrolase activity (in vitro). Can hydrolyze the epoxide leukotriene LTA(4) but it forms preferentially 5,6-dihydroxy-7,9,11,14-eicosatetraenoic acid rather than the cytokine leukotriene B(4) as the product compared to the homologous mammalian enzyme (in vitro). This is Leucine aminopeptidase 2 from Kluyveromyces lactis (strain ATCC 8585 / CBS 2359 / DSM 70799 / NBRC 1267 / NRRL Y-1140 / WM37) (Yeast).